Here is a 301-residue protein sequence, read N- to C-terminus: Phosphatidylglycerol--prolipoprotein diacylglyceryl transferase (301 aa).

4 consecutive transmembrane segments (helical) span residues isoleucine 10 to phenylalanine 30, leucine 57 to tyrosine 77, valine 92 to tryptophan 112, and leucine 119 to glycine 139. A 1,2-diacyl-sn-glycero-3-phospho-(1'-sn-glycerol) is bound at residue arginine 140. 3 helical membrane-spanning segments follow: residues proline 202–phenylalanine 222, tyrosine 230–valine 250, and leucine 264–leucine 284.

The protein belongs to the Lgt family.

It is found in the cell inner membrane. The catalysed reaction is L-cysteinyl-[prolipoprotein] + a 1,2-diacyl-sn-glycero-3-phospho-(1'-sn-glycerol) = an S-1,2-diacyl-sn-glyceryl-L-cysteinyl-[prolipoprotein] + sn-glycerol 1-phosphate + H(+). It participates in protein modification; lipoprotein biosynthesis (diacylglyceryl transfer). Its function is as follows. Catalyzes the transfer of the diacylglyceryl group from phosphatidylglycerol to the sulfhydryl group of the N-terminal cysteine of a prolipoprotein, the first step in the formation of mature lipoproteins. The chain is Phosphatidylglycerol--prolipoprotein diacylglyceryl transferase from Xylella fastidiosa (strain 9a5c).